The following is a 290-amino-acid chain: N-acetylmannosamine kinase (290 aa).

ATP contacts are provided by residues 5–12 (AIDIGGTK) and 132–139 (GVGGGVVS). The Zn(2+) site is built by H156, C166, C168, and C173.

It belongs to the ROK (NagC/XylR) family. NanK subfamily. Homodimer.

It catalyses the reaction an N-acyl-D-mannosamine + ATP = an N-acyl-D-mannosamine 6-phosphate + ADP + H(+). It participates in amino-sugar metabolism; N-acetylneuraminate degradation; D-fructose 6-phosphate from N-acetylneuraminate: step 2/5. In terms of biological role, catalyzes the phosphorylation of N-acetylmannosamine (ManNAc) to ManNAc-6-P. This chain is N-acetylmannosamine kinase, found in Citrobacter koseri (strain ATCC BAA-895 / CDC 4225-83 / SGSC4696).